Reading from the N-terminus, the 467-residue chain is Putative alpha-amylase (467 aa).

Residue Glu-145 is the Nucleophile of the active site.

Belongs to the glycosyl hydrolase 57 family.

The catalysed reaction is Endohydrolysis of (1-&gt;4)-alpha-D-glucosidic linkages in polysaccharides containing three or more (1-&gt;4)-alpha-linked D-glucose units.. The polypeptide is Putative alpha-amylase (Methanocaldococcus jannaschii (strain ATCC 43067 / DSM 2661 / JAL-1 / JCM 10045 / NBRC 100440) (Methanococcus jannaschii)).